Here is a 2262-residue protein sequence, read N- to C-terminus: Protein Ycf2 (2262 aa).

ATP is bound at residue 1607-1614 (GFIGTGRS).

The protein belongs to the Ycf2 family.

It localises to the plastid. It is found in the chloroplast stroma. Probable ATPase of unknown function. Its presence in a non-photosynthetic plant (Epifagus virginiana) and experiments in tobacco indicate that it has an essential function which is probably not related to photosynthesis. In Nuphar advena (Common spatterdock), this protein is Protein Ycf2.